Reading from the N-terminus, the 473-residue chain is Phosphatidylserine synthase 2 (473 aa).

A disordered region spans residues 1-25 (MRRGERRVAGGSGSESPLLKGRRST). The Cytoplasmic segment spans residues 1–40 (MRRGERRVAGGSGSESPLLKGRRSTESEVYDDGTNTFFWR). Phosphoserine occurs at positions 12, 14, and 16. Residues 41–61 (AHTLTVLFILTCALGYVTLLE) traverse the membrane as a helical segment. Residues 62 to 74 (ETPQDTAYNTKRG) are Lumenal-facing. The chain crosses the membrane as a helical span at residues 75 to 95 (IVASILVFLCFGVTQAKDGPF). The Cytoplasmic portion of the chain corresponds to 96-104 (SRPHPAYWR). The chain crosses the membrane as a helical span at residues 105 to 125 (FWLCVSVVYELFLIFILFQTV). Residues 126–291 (QDGRQFLKYV…EWKPASSLHR (166 aa)) lie on the Lumenal side of the membrane. N159 carries an N-linked (GlcNAc...) asparagine glycan. A helical transmembrane segment spans residues 292 to 312 (WLAVCGIILVFLLAELNTFYL). Position 313 (K313) is a topological domain, cytoplasmic. The chain crosses the membrane as a helical span at residues 314–334 (FVLWMPPEHYLVLLRLVFFVN). The Lumenal segment spans residues 335–354 (VGGVAMREIYDFMDELKPHR). A helical transmembrane segment spans residues 355–375 (KLGQQAWLVAAITVTELLIVV). At 376–381 (KYDPHT) the chain is on the cytoplasmic side. The chain crosses the membrane as a helical span at residues 382-402 (LTLSLPFYISQCWTLGSILVL). Residues 403 to 473 (TWTVWRFFLR…TAEEGTSAAS (71 aa)) are Lumenal-facing. Residues 422 to 473 (RRQKQQSHQARAVNNRDGHPGPDDDLLGTGTAEEEGTTNDGVTAEEGTSAAS) form a disordered region.

This sequence belongs to the phosphatidyl serine synthase family. As to expression, highly expressed in testis. Detected at lower levels in kidney and heart.

Its subcellular location is the endoplasmic reticulum membrane. It localises to the membrane. The enzyme catalyses a 1,2-diacyl-sn-glycero-3-phosphoethanolamine + L-serine = a 1,2-diacyl-sn-glycero-3-phospho-L-serine + ethanolamine. The catalysed reaction is 1-hexadecanoyl-2-(9Z-octadecenoyl)-sn-glycero-3-phosphoethanolamine + L-serine = 1-hexadecanoyl-2-(9Z-octadecenoyl)-sn-glycero-3-phospho-L-serine + ethanolamine. It catalyses the reaction 1-hexadecanoyl-2-(4Z,7Z,10Z,13Z,16Z,19Z-docosahexaenoyl)-sn-glycero-3-phosphoethanolamine + L-serine = 1-hexadecanoyl-2-(4Z,7Z,10Z,13Z,16Z,19Z-docosahexaenoyl)-sn-glycero-3-phosphoserine + ethanolamine. It carries out the reaction 1-octadecanoyl-2-(5Z,8Z,11Z,14Z)-eicosatetraenoyl-sn-glycero-3-phosphoethanolamine + L-serine = 1-octadecanoyl-2-(5Z,8Z,11Z,14Z)-eicosatetraenoyl-sn-glycero-3-phosphoserine + ethanolamine. The enzyme catalyses 1-octadecanoyl-2-(4Z,7Z,10Z,13Z,16Z,19Z-docosahexaenoyl)-sn-glycero-3-phosphoethanolamine + L-serine = 1-octadecanoyl-2-(4Z,7Z,10Z,13Z,16Z,19Z-docosahexaenoyl)-sn-glycero-3-phosphoserine + ethanolamine. The catalysed reaction is 1-(1Z-octadecenyl)-2-(4Z,7Z,10Z,13Z,16Z,19Z-docosahexaenoyl)-sn-glycero-3-phosphoethanolamine + L-serine = 1-(1Z-octadecenyl)-2-(4Z,7Z,10Z,13Z,16Z,19Z-docosahexaenoyl)-sn-glycero-3-phospho-L-serine + ethanolamine. It catalyses the reaction 1-octadecanoyl-2-(9Z-octadecenoyl)-sn-glycero-3-phosphoethanolamine + L-serine = 1-octadecanoyl-2-(9Z-octadecenoyl)-sn-glycero-3-phospho-L-serine + ethanolamine. It carries out the reaction 1-(1Z-octadecenyl)-2-(9Z-octadecenoyl)-sn-glycero-3-phosphoethanolamine + L-serine = 1-(1Z-octadecenyl)-2-(9Z-octadecenoyl)-sn-glycero-3-phospho-L-serine + ethanolamine. The enzyme catalyses 1-(1Z-octadecenyl)-2-(5Z,8Z,11Z,14Z- eicosatetraenoyl)-sn-glycero-3-phosphoethanolamine + L-serine = 1-(1Z-octadecenyl)-2-(5Z,8Z,11Z,14Z-eicosatetraenoyl)-sn-glycero-3-phospho-L-serine + ethanolamine. The protein operates within phospholipid metabolism; phosphatidylserine biosynthesis. Its activity is regulated as follows. Almost complete inhibition by ethanolamine in both the mitochondria-associated membrane (MAM) and endoplasmic reticulum (ER) per se. Functionally, catalyzes a base-exchange reaction in which the polar head group of phosphatidylethanolamine (PE) or phosphatidylcholine (PC) is replaced by L-serine. Catalyzes the conversion of phosphatatidylethanolamine and does not act on phosphatidylcholine. Can utilize both phosphatidylethanolamine (PE) plasmalogen and diacyl PE as substrate and the latter is six times better utilized, indicating the importance of an ester linkage at the sn-1 position. Although it shows no sn-1 fatty acyl preference, exhibits significant preference towards docosahexaenoic acid (22:6n-3) compared with 18:1 or 20:4 at the sn-2 position. This is Phosphatidylserine synthase 2 (Ptdss2) from Mus musculus (Mouse).